The sequence spans 536 residues: Putative UDP-glucuronosyltransferase ugt-47 (536 aa).

An N-terminal signal peptide occupies residues 1–21; sequence MFRYHSILLLAILYFFEYGLA. Residues asparagine 52 and asparagine 308 are each glycosylated (N-linked (GlcNAc...) asparagine). The helical transmembrane segment at 497–517 threads the bilayer; the sequence is IIVPCFFVAFYFIIFPFFKLF.

This sequence belongs to the UDP-glycosyltransferase family.

The protein resides in the membrane. The catalysed reaction is glucuronate acceptor + UDP-alpha-D-glucuronate = acceptor beta-D-glucuronoside + UDP + H(+). The sequence is that of Putative UDP-glucuronosyltransferase ugt-47 (ugt-47) from Caenorhabditis elegans.